Here is a 925-residue protein sequence, read N- to C-terminus: MNNQTNQQSQTQSQSQQRINFDITGWEKKSKLSTQQYLLINNLNKSTQEKPLPQKYLEDKINNDIKKEENQQLQQQQQQQQQQQQQQQSPIIENFMDNFNPKTDIDNLSDFYQWYSIIDKNNPHLHQYEWFLETIVNYSKGSNQLLSMVENCDKLVESIQTDYSNLTKKTNQLNEDCEKFFNEELKLRYIAQSIHDKLKFYNQLEIQTKKFNTTNFNVTDSTFLTSLENLENSINFMKSNSTFMESNKYLTQYGFIFSRALGLIKDYISSNLKILSRDIINAQKQLKTSVSTPTSPQLQSSSGGSPLINDFSNSTDFNDLFQHSNIRFRAFAPKLRPLCLELEKRAIGPYLSYLYDTQNIYFNNRRSILSLIMFEKLQSLSKMTDISSMIRSSSLFMIQFYENEYQIYSNFFSPPDLNNNNNNNNNNNNNDNINNSTNINNSNNTNNNNQDIINNCPAFSNILDEYSQQLYDTIRPIYIHIHSFETLCNLAHLIRNELIDDLVQKSMKYSNGFKMTIERMLQDIQERLIFIIQTYIRDEIRSYHPNSDDLDYPNKLKIYVTAESTAVDGDGNGSGNSSPTLSYKSIYSTWYPTLEKSLTCLSKLYLVLETRIFEGLAQEVVEACTFTLIQASRLLLIQQKNDPYIILDSQLFLIKNLLTLREQIAPFDINFVIIEKIVDFPNLKHSLSTLYNVGSFLTLSTNNPILSLLSPRVTNTSIDSKKDLEKELKQSIESFILSNANTIIDPLLSLLTKISVFLNQSNKNQTDPMLLSQQSFADPQRIKEIIEQVKEKASNYLPQVIDRMKLYLSISTQILLMKPIRTNIIDSFDQINQYTKKYYTEDQIKIIDLQSLKLILDKILTPSKQSNNNNNNNNNNNNNNNNNNNNNNNNNNNNNNNNNNNNKNENNENENENNSNVNSPSPQQL.

Disordered stretches follow at residues 68 to 88, 416 to 446, and 863 to 925; these read EENQQLQQQQQQQQQQQQQQQ, DLNNNNNNNNNNNNNDNINNSTNINNSNNTN, and SKQS…PQQL. Low complexity-rich tracts occupy residues 71-88, 418-446, and 867-904; these read QQLQQQQQQQQQQQQQQQ, NNNNNNNNNNNNNDNINNSTNINNSNNTN, and NNNNNNNNNNNNNNNNNNNNNNNNNNNNNNNNNNNNKN.

It belongs to the COG3 family. As to quaternary structure, component of the conserved oligomeric Golgi complex which is composed of eight different subunits and is required for normal Golgi morphology and localization.

Its subcellular location is the golgi apparatus membrane. Required for normal Golgi function. The sequence is that of Conserved oligomeric Golgi complex subunit 3 (cog3) from Dictyostelium discoideum (Social amoeba).